The sequence spans 356 residues: Peptide chain release factor 1 (356 aa).

Q235 bears the N5-methylglutamine mark.

Belongs to the prokaryotic/mitochondrial release factor family. In terms of processing, methylated by PrmC. Methylation increases the termination efficiency of RF1.

Its subcellular location is the cytoplasm. Its function is as follows. Peptide chain release factor 1 directs the termination of translation in response to the peptide chain termination codons UAG and UAA. The protein is Peptide chain release factor 1 of Hydrogenobaculum sp. (strain Y04AAS1).